The chain runs to 563 residues: Adenine deaminase (563 aa).

Belongs to the metallo-dependent hydrolases superfamily. Adenine deaminase family. It depends on Mn(2+) as a cofactor.

The enzyme catalyses adenine + H2O + H(+) = hypoxanthine + NH4(+). This chain is Adenine deaminase, found in Brucella anthropi (strain ATCC 49188 / DSM 6882 / CCUG 24695 / JCM 21032 / LMG 3331 / NBRC 15819 / NCTC 12168 / Alc 37) (Ochrobactrum anthropi).